Here is a 286-residue protein sequence, read N- to C-terminus: D-tagatose-1,6-bisphosphate aldolase subunit KbaY (286 aa).

The active-site Proton donor is D82. Positions 83 and 180 each coordinate Zn(2+). G181 is a dihydroxyacetone phosphate binding site. H208 is a binding site for Zn(2+). Dihydroxyacetone phosphate contacts are provided by residues 209–211 and 230–233; these read GAS and NVAT.

The protein belongs to the class II fructose-bisphosphate aldolase family. TagBP aldolase KbaY subfamily. Homotetramer. Forms a complex with KbaZ. Requires Zn(2+) as cofactor.

The enzyme catalyses D-tagatofuranose 1,6-bisphosphate = D-glyceraldehyde 3-phosphate + dihydroxyacetone phosphate. Its pathway is carbohydrate metabolism; D-tagatose 6-phosphate degradation; D-glyceraldehyde 3-phosphate and glycerone phosphate from D-tagatose 6-phosphate: step 2/2. Functionally, catalytic subunit of the tagatose-1,6-bisphosphate aldolase KbaYZ, which catalyzes the reversible aldol condensation of dihydroxyacetone phosphate (DHAP or glycerone-phosphate) with glyceraldehyde 3-phosphate (G3P) to produce tagatose 1,6-bisphosphate (TBP). Requires KbaZ subunit for full activity and stability. The chain is D-tagatose-1,6-bisphosphate aldolase subunit KbaY from Escherichia coli O7:K1 (strain IAI39 / ExPEC).